Reading from the N-terminus, the 341-residue chain is Ketol-acid reductoisomerase (NADP(+)) (341 aa).

Positions 2-181 (AKVYYNGDAN…GATRAGVLET (180 aa)) constitute a KARI N-terminal Rossmann domain. NADP(+) contacts are provided by residues 25 to 28 (YGSQ), R48, S52, and 82 to 85 (DEKQ). The active site involves H107. Position 133 (G133) interacts with NADP(+). The KARI C-terminal knotted domain occupies 182 to 327 (TFKEETETDL…RELRSMMPFV (146 aa)). Positions 190, 194, 226, and 230 each coordinate Mg(2+). Position 251 (S251) interacts with substrate.

It belongs to the ketol-acid reductoisomerase family. Mg(2+) serves as cofactor.

It carries out the reaction (2R)-2,3-dihydroxy-3-methylbutanoate + NADP(+) = (2S)-2-acetolactate + NADPH + H(+). The enzyme catalyses (2R,3R)-2,3-dihydroxy-3-methylpentanoate + NADP(+) = (S)-2-ethyl-2-hydroxy-3-oxobutanoate + NADPH + H(+). Its pathway is amino-acid biosynthesis; L-isoleucine biosynthesis; L-isoleucine from 2-oxobutanoate: step 2/4. It participates in amino-acid biosynthesis; L-valine biosynthesis; L-valine from pyruvate: step 2/4. Its function is as follows. Involved in the biosynthesis of branched-chain amino acids (BCAA). Catalyzes an alkyl-migration followed by a ketol-acid reduction of (S)-2-acetolactate (S2AL) to yield (R)-2,3-dihydroxy-isovalerate. In the isomerase reaction, S2AL is rearranged via a Mg-dependent methyl migration to produce 3-hydroxy-3-methyl-2-ketobutyrate (HMKB). In the reductase reaction, this 2-ketoacid undergoes a metal-dependent reduction by NADPH to yield (R)-2,3-dihydroxy-isovalerate. The protein is Ketol-acid reductoisomerase (NADP(+)) of Geobacillus sp. (strain WCH70).